The sequence spans 237 residues: Urease accessory protein UreF (237 aa).

Belongs to the UreF family. As to quaternary structure, ureD, UreF and UreG form a complex that acts as a GTP-hydrolysis-dependent molecular chaperone, activating the urease apoprotein by helping to assemble the nickel containing metallocenter of UreC. The UreE protein probably delivers the nickel.

The protein resides in the cytoplasm. Its function is as follows. Required for maturation of urease via the functional incorporation of the urease nickel metallocenter. This is Urease accessory protein UreF from Methylibium petroleiphilum (strain ATCC BAA-1232 / LMG 22953 / PM1).